The following is a 443-amino-acid chain: Transcriptional adapter 2-alpha (443 aa).

The residue at position 6 (S6) is a Phosphoserine. The ZZ-type zinc finger occupies 12–69 (SDKPPCRGCSSYLTEPYIKCAECGPPPFFLCLQCFTRGFEYKKHQSDHTYEIMTSDFP). The Zn(2+) site is built by C17, C20, C31, C34, C42, C45, H55, and H59. Positions 70–122 (VLDPSWTAQEEMALLEAVMDCGFGNWQDVANQMCTKTKEECEKHYMKHFINNP) constitute an SANT domain. Residues K132 and K138 each participate in a glycyl lysine isopeptide (Lys-Gly) (interchain with G-Cter in SUMO2) cross-link. The region spanning 356-443 (NSGRRSAPPL…LIREGYITKA (88 aa)) is the SWIRM domain. The DNA-binding element occupies 426-435 (KTRKIYDFLI).

In terms of assembly, interacts with GCN5. Interacts with NR3C1. Associated with the P/CAF protein in the PCAF complex. Component of the PCAF complex, at least composed of TADA2L/ADA2, TADA3L/ADA3, TAF5L/PAF65-beta, TAF6L/PAF65-alpha, TAF10/TAFII30, TAF12/TAFII20, TAF9/TAFII31 and TRRAP. Component of the ADA2A-containing complex (ATAC), composed of KAT14, KAT2A, TADA2L, TADA3L, ZZ3, MBIP, WDR5, YEATS2, CCDC101 and DR1. Interacts with CCDC134.

Its subcellular location is the nucleus. The protein resides in the chromosome. Component of the ATAC complex, a complex with histone acetyltransferase activity on histones H3 and H4. Required for the function of some acidic activation domains, which activate transcription from a distant site. Binds double-stranded DNA. Binds dinucleosomes, probably at the linker region between neighboring nucleosomes. Plays a role in chromatin remodeling. May promote TP53/p53 'Lys-321' acetylation, leading to reduced TP53 stability and transcriptional activity. May also promote XRCC6 acetylation thus facilitating cell apoptosis in response to DNA damage. This Mus musculus (Mouse) protein is Transcriptional adapter 2-alpha (Tada2a).